We begin with the raw amino-acid sequence, 323 residues long: Acetyl esterase (323 aa).

The Involved in the stabilization of the negatively charged intermediate by the formation of the oxyanion hole motif lies at 91–93; it reads HGG. Residues serine 165, aspartate 262, and histidine 292 contribute to the active site.

This sequence belongs to the 'GDXG' lipolytic enzyme family. In terms of assembly, homodimer. Interacts with MalT and MelA.

The protein resides in the cytoplasm. Its function is as follows. Displays esterase activity towards short chain fatty esters (acyl chain length of up to 8 carbons). Able to hydrolyze triacetylglycerol (triacetin) and tributyrylglycerol (tributyrin), but not trioleylglycerol (triolein) or cholesterol oleate. Negatively regulates MalT activity by antagonizing maltotriose binding. Inhibits MelA galactosidase activity. The protein is Acetyl esterase of Salmonella schwarzengrund (strain CVM19633).